The following is a 526-amino-acid chain: Trigger factor (526 aa).

The region spanning 162–243 (GDFVSIDLSA…LGSVKERELP (82 aa)) is the PPIase FKBP-type domain. Positions 425-460 (DTDGADVDPKEYFGDVEAEGDKADKAETDKAEEKPK) are enriched in basic and acidic residues. Positions 425 to 526 (DTDGADVDPK…AKKAAEKKED (102 aa)) are disordered. The segment covering 461-517 (KAPAKKSTTKKSTAKKSTAKKSTAKKSTAKKSTAKKSTTKKATKSTAKKSTAKKTTA) has biased composition (basic residues).

It belongs to the FKBP-type PPIase family. Tig subfamily.

It is found in the cytoplasm. It carries out the reaction [protein]-peptidylproline (omega=180) = [protein]-peptidylproline (omega=0). In terms of biological role, involved in protein export. Acts as a chaperone by maintaining the newly synthesized protein in an open conformation. Functions as a peptidyl-prolyl cis-trans isomerase. In Corynebacterium jeikeium (strain K411), this protein is Trigger factor.